The chain runs to 235 residues: Cobalt transport protein CbiM (235 aa).

The first 33 residues, 1–33 (MRYLKFFLLLVFLVPSFGFSMHIMEGFLPPTHA), serve as a signal peptide directing secretion. The next 6 membrane-spanning stretches (helical) occupy residues 34-51 (LIWY…LFTI), 63-83 (MLLA…IPSV), 95-115 (LGAI…VLLF), 118-138 (LLLA…MAIV), 156-176 (NIAV…TTSF), and 199-219 (IFAI…VVVI).

This sequence belongs to the CbiM family. Forms an energy-coupling factor (ECF) transporter complex composed of an ATP-binding protein (A component, CbiO), a transmembrane protein (T component, CbiQ) and 2 possible substrate-capture proteins (S components, CbiM and CbiN) of unknown stoichimetry.

Its subcellular location is the cell inner membrane. Its pathway is cofactor biosynthesis; adenosylcobalamin biosynthesis. In terms of biological role, part of the energy-coupling factor (ECF) transporter complex CbiMNOQ involved in cobalt import. The polypeptide is Cobalt transport protein CbiM (Thermosipho melanesiensis (strain DSM 12029 / CIP 104789 / BI429)).